A 424-amino-acid chain; its full sequence is Probable serine/threonine-protein kinase PBL15 (424 aa).

The 282-residue stretch at Phe99 to Ile380 folds into the Protein kinase domain. Residues Leu105 to Val113 and Lys134 each bind ATP. Phosphotyrosine is present on Tyr179. The active-site Proton acceptor is the Asp229. Ser233 carries the phosphoserine modification. A phosphothreonine mark is found at Thr264 and Thr269. A Phosphotyrosine modification is found at Tyr277. Residues Gly390–Ser424 are disordered.

It belongs to the protein kinase superfamily. Ser/Thr protein kinase family. In terms of assembly, interacts with the Xanthomonas campestris effector XopAC/AvrAC.

It is found in the cell membrane. It catalyses the reaction L-seryl-[protein] + ATP = O-phospho-L-seryl-[protein] + ADP + H(+). The catalysed reaction is L-threonyl-[protein] + ATP = O-phospho-L-threonyl-[protein] + ADP + H(+). May be involved in plant defense signaling. In Arabidopsis thaliana (Mouse-ear cress), this protein is Probable serine/threonine-protein kinase PBL15.